We begin with the raw amino-acid sequence, 128 residues long: Ig kappa chain V-V region T1 (128 aa).

An N-terminal signal peptide occupies residues 1–20; that stretch reads MRTPAQFLGILLLWFPGIKC. The framework-1 stretch occupies residues 21-43; the sequence is DIKMTQSPSSMYASLGERVTISC. The cysteines at positions 43 and 108 are disulfide-linked. A complementarity-determining-1 region spans residues 44–54; sequence KASQDINSYLT. The framework-2 stretch occupies residues 55–69; sequence WFQQKPGKSPKTLLY. The tract at residues 70–76 is complementarity-determining-2; it reads RANRLVD. Residues 77-108 form a framework-3 region; sequence GVPSRFSGSGSGQDFSLTISSLEYEDMGIYYC. Residues 109-117 are complementarity-determining-3; that stretch reads LQYDEFPLT. The framework-4 stretch occupies residues 118–127; sequence FGAGTKLELK.

The chain is Ig kappa chain V-V region T1 from Mus musculus (Mouse).